We begin with the raw amino-acid sequence, 318 residues long: Protein teg (318 aa).

One can recognise a PNPLA domain in the interval 7-182 (ITFDGGGTLG…VATNTSTASI (176 aa)). The GXGXXG motif lies at 11–16 (GGGTLG). The short motif at 42-46 (GNSIG) is the GXSXG element. S44 (nucleophile) is an active-site residue. The active-site Proton acceptor is D169.

Functionally, probable lipid hydrolase. The polypeptide is Protein teg (teg) (Priestia megaterium (strain ATCC 14581 / DSM 32 / CCUG 1817 / JCM 2506 / NBRC 15308 / NCIMB 9376 / NCTC 10342 / NRRL B-14308 / VKM B-512 / Ford 19) (Bacillus megaterium)).